A 169-amino-acid chain; its full sequence is Endoribonuclease YbeY (169 aa).

Zn(2+)-binding residues include histidine 128, histidine 132, and histidine 138.

This sequence belongs to the endoribonuclease YbeY family. Zn(2+) serves as cofactor.

It localises to the cytoplasm. Single strand-specific metallo-endoribonuclease involved in late-stage 70S ribosome quality control and in maturation of the 3' terminus of the 16S rRNA. In Rhizorhabdus wittichii (strain DSM 6014 / CCUG 31198 / JCM 15750 / NBRC 105917 / EY 4224 / RW1) (Sphingomonas wittichii), this protein is Endoribonuclease YbeY.